A 617-amino-acid chain; its full sequence is Bifunctional TH2 protein, mitochondrial (617 aa).

The N-terminal 28 residues, 1-28 (MRFLFPTRLINNSSLGLLRSPHTTAPIR), are a transit peptide targeting the mitochondrion. Aspartate 107 provides a ligand contact to substrate. Cysteine 213 functions as the Nucleophile in the catalytic mechanism. Residues tyrosine 217 and tyrosine 244 each contribute to the substrate site. Glutamate 286 (proton donor) is an active-site residue.

The protein in the N-terminal section; belongs to the TenA family. This sequence in the C-terminal section; belongs to the HAD-like hydrolase superfamily.

The protein resides in the mitochondrion. Its subcellular location is the cytoplasm. It carries out the reaction thiamine phosphate + H2O = thiamine + phosphate. The enzyme catalyses 4-amino-5-aminomethyl-2-methylpyrimidine + H2O = 4-amino-5-hydroxymethyl-2-methylpyrimidine + NH4(+). May be involved in the salvage of thiamine breakdown products. This protein has a haloacid dehalogenase family domain fused to its TenA domain. Phosphatase with the highest activity against thiamine monophosphate (ThMP) and, with a lower activity, against thiamine diphosphate (ThDP), flavin mononucleotide, inorganic pyrophosphate, CTP and dATP. Has a thiamine salvage hydrolase activity, but only against 4-amino-5-aminomethyl-2-methylpyrimidine (amino-HMP) and not against N-formylamino-HMP, desthiothiamine, thiamine, ThMP, and ThDP. The protein is Bifunctional TH2 protein, mitochondrial of Arabidopsis thaliana (Mouse-ear cress).